A 1284-amino-acid chain; its full sequence is Neuronal cell adhesion molecule (1284 aa).

A signal peptide spans 1 to 24; it reads MMKEKSISASKASLVFFLCQMISA. The Extracellular portion of the chain corresponds to 25–1143; sequence LDVPLDSKLL…ASRQVDIATQ (1119 aa). 6 consecutive Ig-like C2-type domains span residues 41-129, 136-230, 243-332, 337-424, 430-517, and 521-608; these read PTIT…AAIS, PSRS…QPIS, PPVL…ISVT, PYWI…AFVN, PRIL…VQLE, and PTMI…AVLT. Cystine bridges form between Cys63–Cys118 and Cys162–Cys213. N-linked (GlcNAc...) asparagine glycosylation occurs at Asn78. N-linked (GlcNAc...) asparagine glycans are attached at residues Asn218 and Asn290. 2 disulfides stabilise this stretch: Cys268/Cys316 and Cys358/Cys408. 6 N-linked (GlcNAc...) asparagine glycosylation sites follow: Asn409, Asn483, Asn576, Asn581, Asn595, and Asn692. 2 disulfides stabilise this stretch: Cys452-Cys501 and Cys543-Cys592. 5 Fibronectin type-III domains span residues 625 to 720, 725 to 819, 824 to 926, 930 to 1026, and 1040 to 1132; these read PPLD…TKSA, NPSN…SGED, APGN…TPEG, PPSF…IMDE, and QPLY…TGPA. Over residues 707 to 731 the composition is skewed to polar residues; sequence QPSEPSEQYLTKSANPDENPSNVQG. The segment at 707-732 is disordered; it reads QPSEPSEQYLTKSANPDENPSNVQGI. Residues Asn778, Asn834, Asn885, Asn969, Asn985, Asn995, Asn1048, Asn1059, and Asn1091 are each glycosylated (N-linked (GlcNAc...) asparagine). Residues 1144-1166 form a helical membrane-spanning segment; it reads GWFIGLMCAVALLILILLIVCFI. Topologically, residues 1167 to 1284 are cytoplasmic; sequence RRNKGGKYPV…SPVNAMNSFV (118 aa). Basic and acidic residues-rich tracts occupy residues 1175-1195, 1202-1212, and 1221-1230; these read PVKEKEDAHADPEIQPMKEDD, RSLESDAEDHK, and PSDRTVKKED. Residues 1175–1284 are disordered; that stretch reads PVKEKEDAHA…SPVNAMNSFV (110 aa). Over residues 1268 to 1284 the composition is skewed to polar residues; sequence NESSEAPSPVNAMNSFV.

Belongs to the immunoglobulin superfamily. L1/neurofascin/NgCAM family. In terms of assembly, heterodimer of an alpha and a beta chain. In terms of tissue distribution, retina and developing brain.

The protein localises to the cell membrane. Its function is as follows. This protein is a cell adhesion molecule involved in neuron-neuron adhesion, neurite fasciculation, outgrowth of neurites, etc. Specifically involved in the development of optic fibres in the retina. The polypeptide is Neuronal cell adhesion molecule (Gallus gallus (Chicken)).